The following is a 613-amino-acid chain: Laccase 1 (613 aa).

A signal peptide spans 1–20; that stretch reads MSRFARLLLIVALFFTNAWA. 2 consecutive Plastocyanin-like domains span residues 29–142 and 171–359; these read ITWK…IRPK and YLVV…MRIP. An N-linked (GlcNAc...) asparagine glycan is attached at Asn-74. His-78, His-80, His-122, and His-124 together coordinate Cu cation. Residues Asn-256, Asn-279, Asn-444, Asn-468, and Asn-484 are each glycosylated (N-linked (GlcNAc...) asparagine). The 131-residue stretch at 468 to 598 folds into the Plastocyanin-like 3 domain; that stretch reads NATRDTENDG…GGMGIAILDG (131 aa). Residues His-506, His-509, and His-511 each contribute to the Cu cation site. Asn-526 carries an N-linked (GlcNAc...) asparagine glycan. His-580, Cys-581, His-582, and His-586 together coordinate Cu cation.

This sequence belongs to the multicopper oxidase family. Cu cation serves as cofactor.

The protein localises to the cell surface. It participates in pigment biosynthesis. Its function is as follows. Laccase; part of the Pks1 gene cluster that mediates the biosynthesis of an anthraquinone derivative pigment that contributes to conidial pigmentation that provides protection from UV radiation, heat and cold stress. The polyketide synthase Pks1 produces 1-acetyl-2,4,6,8-tetrahydroxy-9,10-anthraquinone though condensation of acetyl-CoA with malonyl-CoA. The dehydratase EthD and the laccase Mlac1 further convert the anthraquinone derivative into the final conidial pigment. The chain is Laccase 1 from Metarhizium robertsii (strain ARSEF 23 / ATCC MYA-3075) (Metarhizium anisopliae (strain ARSEF 23)).